The chain runs to 69 residues: Guanine nucleotide-binding protein G(I)/G(S)/G(O) subunit gamma-T2 (69 aa).

A Cysteine methyl ester modification is found at C66. The S-farnesyl cysteine moiety is linked to residue C66. The propeptide at 67–69 (IIS) is removed in mature form.

The protein belongs to the G protein gamma family. In terms of assembly, g proteins are composed of 3 units, alpha, beta and gamma.

Its subcellular location is the cell membrane. In terms of biological role, guanine nucleotide-binding proteins (G proteins) are involved as a modulator or transducer in various transmembrane signaling systems. The beta and gamma chains are required for the GTPase activity, for replacement of GDP by GTP, and for G protein-effector interaction. This Bos taurus (Bovine) protein is Guanine nucleotide-binding protein G(I)/G(S)/G(O) subunit gamma-T2 (GNGT2).